Reading from the N-terminus, the 440-residue chain is NADH-quinone oxidoreductase subunit D (440 aa).

Belongs to the complex I 49 kDa subunit family. As to quaternary structure, NDH-1 is composed of 14 different subunits. Subunits NuoB, C, D, E, F, and G constitute the peripheral sector of the complex.

It localises to the cell membrane. It carries out the reaction a quinone + NADH + 5 H(+)(in) = a quinol + NAD(+) + 4 H(+)(out). Functionally, NDH-1 shuttles electrons from NADH, via FMN and iron-sulfur (Fe-S) centers, to quinones in the respiratory chain. The immediate electron acceptor for the enzyme in this species is believed to be a menaquinone. Couples the redox reaction to proton translocation (for every two electrons transferred, four hydrogen ions are translocated across the cytoplasmic membrane), and thus conserves the redox energy in a proton gradient. This is NADH-quinone oxidoreductase subunit D from Mycobacterium bovis (strain ATCC BAA-935 / AF2122/97).